A 176-amino-acid chain; its full sequence is UPF0098 protein Rv2140c (176 aa).

Position 2 is an N-acetylthreonine (T2).

This sequence belongs to the UPF0098 family.

The polypeptide is UPF0098 protein Rv2140c (Mycobacterium tuberculosis (strain ATCC 25618 / H37Rv)).